A 1133-amino-acid polypeptide reads, in one-letter code: Lysylphosphatidylglycerol biosynthesis bifunctional protein LysX (1133 aa).

The phosphatidylglycerol lysyltransferase stretch occupies residues 1-626 (MTTVDASPGI…LLHHDGSTPD (626 aa)). The next 7 helical transmembrane spans lie at 43 to 63 (VPAA…IASV), 82 to 102 (LFNF…LAAA), 109 to 129 (IAWL…AVDM), 140 to 160 (FGEN…VLSY), 177 to 197 (AVLV…VELF), 233 to 253 (LNAI…IVLF), and 575 to 595 (LIPR…LPFS). A lysine--tRNA ligase region spans residues 627-1133 (VSGLQTADVD…TLPFPLAKPH (507 aa)). Residues aspartate 1045 and glutamate 1052 each coordinate Mg(2+).

The protein in the N-terminal section; belongs to the LPG synthetase family. It in the C-terminal section; belongs to the class-II aminoacyl-tRNA synthetase family. The cofactor is Mg(2+).

The protein localises to the cell membrane. It catalyses the reaction tRNA(Lys) + L-lysine + ATP = L-lysyl-tRNA(Lys) + AMP + diphosphate. The enzyme catalyses L-lysyl-tRNA(Lys) + a 1,2-diacyl-sn-glycero-3-phospho-(1'-sn-glycerol) = a 1,2-diacyl-sn-glycero-3-phospho-1'-(3'-O-L-lysyl)-sn-glycerol + tRNA(Lys). In terms of biological role, catalyzes the production of L-lysyl-tRNA(Lys)transfer and the transfer of a lysyl group from L-lysyl-tRNA(Lys) to membrane-bound phosphatidylglycerol (PG), which produces lysylphosphatidylglycerol (LPG), one of the components of the bacterial membrane with a positive net charge. LPG synthesis contributes to the resistance to cationic antimicrobial peptides (CAMPs) and likely protects M.tuberculosis against the CAMPs produced by competiting microorganisms (bacteriocins). In fact, the modification of anionic phosphatidylglycerol with positively charged L-lysine results in repulsion of the peptides. The protein is Lysylphosphatidylglycerol biosynthesis bifunctional protein LysX (lysX) of Mycobacterium leprae (strain Br4923).